Consider the following 116-residue polypeptide: MKKEYRVKKDKEFQAVFTRGASVANRQFVVYALKKEQQTHFRIGLSVSKKIGNAVVRNQVKRYVREACQLHEASLAPNYDFVIIARNPAAKMTAQEVADSLRHVFKRSGVWKRQVK.

The protein belongs to the RnpA family. As to quaternary structure, consists of a catalytic RNA component (M1 or rnpB) and a protein subunit.

The enzyme catalyses Endonucleolytic cleavage of RNA, removing 5'-extranucleotides from tRNA precursor.. In terms of biological role, RNaseP catalyzes the removal of the 5'-leader sequence from pre-tRNA to produce the mature 5'-terminus. It can also cleave other RNA substrates such as 4.5S RNA. The protein component plays an auxiliary but essential role in vivo by binding to the 5'-leader sequence and broadening the substrate specificity of the ribozyme. The sequence is that of Ribonuclease P protein component from Exiguobacterium sibiricum (strain DSM 17290 / CCUG 55495 / CIP 109462 / JCM 13490 / 255-15).